The following is a 517-amino-acid chain: MGNYKSNLETKIGVVKNPILVSCRESIMENKKSFYGRFYIGPLEVGQGITLANALRRALLSELNGLAITTVEIEGVSHEYSTLMGVRESVLDILLNLKQIVLKSKKSVKRAQTAYIYCQGPGVIRAGDIILPSSIQCVDPEQYIATLSSDGILKMKVIIRQGKNYLVQTPNSLFFDEVSEFVLDKNNLAEKRSEKQSFQHKIFLQNSVNKKKWGKVEEKKEPKLSFFSHSGSRPSFLFKTKVGLKSKALTFSFQNSRSLYTISQNSKNKELFINLFKKQIYSILALKVSITKSQDPNNFSNLLCSFFLTSKNKTKPLFIDAVFMPVTKVNYTLEENKQKLFDEIYPIVSNDNLEKNWVKVKKSGFFLSNQQLSFEKNSLFEESKLQQNTNNEAKHKNNGNGKFVDSKLLKQSTTSNFDYNYWSLFSAELNNNSSSWTTLNSNIFFEHFNQSPKDIIILEIWTNGSILPRTALKHATQNLSNLFIKFQNAKMMKNSFFETNKTYTQTIRQLYEKYQNF.

Belongs to the RNA polymerase alpha chain family. In terms of assembly, in plastids the minimal PEP RNA polymerase catalytic core is composed of four subunits: alpha, beta, beta', and beta''. When a (nuclear-encoded) sigma factor is associated with the core the holoenzyme is formed, which can initiate transcription.

The protein resides in the plastid. The protein localises to the chloroplast. It catalyses the reaction RNA(n) + a ribonucleoside 5'-triphosphate = RNA(n+1) + diphosphate. DNA-dependent RNA polymerase catalyzes the transcription of DNA into RNA using the four ribonucleoside triphosphates as substrates. The polypeptide is DNA-directed RNA polymerase subunit alpha (rpoA) (Stigeoclonium helveticum (Green alga)).